Reading from the N-terminus, the 161-residue chain is MSKEEKLAIAAATDGACSGNPGPGGWGALIRFQDGSEIEFGGNSPETTNNRMELQAALFILEKLKNIEFAPSLTIKTDSKYLIDGMEKWMPNWKKKGWKTASGKPVLNQDLWKALDHPELPKIKLQYVKGHSGEKDNDRVDAIAVAFSKGRKIQLKDFANN.

In terms of domain architecture, RNase H type-1 spans 5–149; sequence EKLAIAAATD…VDAIAVAFSK (145 aa). The Mg(2+) site is built by D14, E53, D78, and D141.

The protein belongs to the RNase H family. As to quaternary structure, monomer. Mg(2+) serves as cofactor.

Its subcellular location is the cytoplasm. It catalyses the reaction Endonucleolytic cleavage to 5'-phosphomonoester.. Its function is as follows. Endonuclease that specifically degrades the RNA of RNA-DNA hybrids. The sequence is that of Ribonuclease H from Prochlorococcus marinus (strain NATL1A).